A 609-amino-acid chain; its full sequence is Glutamine--fructose-6-phosphate aminotransferase [isomerizing] (609 aa).

The active-site Nucleophile; for GATase activity is the C2. In terms of domain architecture, Glutamine amidotransferase type-2 spans 2-219; that stretch reads CGIFGYLGSK…SGELAIVGLG (218 aa). 2 consecutive SIS domains span residues 280 to 426 and 458 to 599; these read ISEK…SKHT and WAHT…IDCP. Residue K604 is the For Fru-6P isomerization activity of the active site.

As to quaternary structure, homodimer.

It localises to the cytoplasm. The enzyme catalyses D-fructose 6-phosphate + L-glutamine = D-glucosamine 6-phosphate + L-glutamate. Functionally, catalyzes the first step in hexosamine metabolism, converting fructose-6P into glucosamine-6P using glutamine as a nitrogen source. This is Glutamine--fructose-6-phosphate aminotransferase [isomerizing] from Chlamydia abortus (strain DSM 27085 / S26/3) (Chlamydophila abortus).